The chain runs to 277 residues: Bis(5'-nucleosyl)-tetraphosphatase, symmetrical (277 aa).

Belongs to the Ap4A hydrolase family.

It carries out the reaction P(1),P(4)-bis(5'-adenosyl) tetraphosphate + H2O = 2 ADP + 2 H(+). Its function is as follows. Hydrolyzes diadenosine 5',5'''-P1,P4-tetraphosphate to yield ADP. This Methylobacillus flagellatus (strain ATCC 51484 / DSM 6875 / VKM B-1610 / KT) protein is Bis(5'-nucleosyl)-tetraphosphatase, symmetrical.